Here is a 288-residue protein sequence, read N- to C-terminus: Protoheme IX farnesyltransferase 2 (288 aa).

8 helical membrane-spanning segments follow: residues 16 to 36, 38 to 58, 88 to 108, 111 to 131, 139 to 159, 166 to 186, 227 to 247, and 266 to 286; these read IGVF…GAVP, FAPV…AGAF, LWPL…AFAA, WAAL…TVWL, IVIG…VAVP, LILA…LATA, AFFG…GWFL, and FFAS…EPLL.

Belongs to the UbiA prenyltransferase family. Protoheme IX farnesyltransferase subfamily.

It localises to the cell inner membrane. It carries out the reaction heme b + (2E,6E)-farnesyl diphosphate + H2O = Fe(II)-heme o + diphosphate. Its pathway is porphyrin-containing compound metabolism; heme O biosynthesis; heme O from protoheme: step 1/1. Converts heme B (protoheme IX) to heme O by substitution of the vinyl group on carbon 2 of heme B porphyrin ring with a hydroxyethyl farnesyl side group. This chain is Protoheme IX farnesyltransferase 2, found in Paramagnetospirillum magneticum (strain ATCC 700264 / AMB-1) (Magnetospirillum magneticum).